A 579-amino-acid chain; its full sequence is ATP-dependent lipid A-core flippase (579 aa).

Transmembrane regions (helical) follow at residues 24 to 44 (FALS…LPAL), 63 to 83 (WVPL…FIST), 150 to 170 (VLGL…IVFA), 251 to 271 (VIQF…AGQA), and 275 to 295 (TTTV…FAPL). An ABC transmembrane type-1 domain is found at 25-307 (ALSIVGLILT…LTAVNDQLQR (283 aa)). The 237-residue stretch at 339 to 575 (LAFRDVGLTY…QGRYAQLHAL (237 aa)) folds into the ABC transporter domain. 373-380 (GASGSGKT) is a binding site for ATP.

This sequence belongs to the ABC transporter superfamily. Lipid exporter (TC 3.A.1.106) family. As to quaternary structure, homodimer.

The protein localises to the cell inner membrane. The catalysed reaction is ATP + H2O + lipid A-core oligosaccharideSide 1 = ADP + phosphate + lipid A-core oligosaccharideSide 2.. Functionally, involved in lipopolysaccharide (LPS) biosynthesis. Translocates lipid A-core from the inner to the outer leaflet of the inner membrane. Transmembrane domains (TMD) form a pore in the inner membrane and the ATP-binding domain (NBD) is responsible for energy generation. This Thiobacillus denitrificans (strain ATCC 25259 / T1) protein is ATP-dependent lipid A-core flippase.